A 278-amino-acid chain; its full sequence is 3-methyl-2-oxobutanoate hydroxymethyltransferase (278 aa).

Asp-43 and Asp-82 together coordinate Mg(2+). 3-methyl-2-oxobutanoate-binding positions include Asp-43–Ser-44, Asp-82, and Lys-112. Glu-114 lines the Mg(2+) pocket. Glu-181 functions as the Proton acceptor in the catalytic mechanism.

It belongs to the PanB family. As to quaternary structure, homodecamer; pentamer of dimers. Mg(2+) serves as cofactor.

It is found in the cytoplasm. It carries out the reaction 3-methyl-2-oxobutanoate + (6R)-5,10-methylene-5,6,7,8-tetrahydrofolate + H2O = 2-dehydropantoate + (6S)-5,6,7,8-tetrahydrofolate. Its pathway is cofactor biosynthesis; (R)-pantothenate biosynthesis; (R)-pantoate from 3-methyl-2-oxobutanoate: step 1/2. Catalyzes the reversible reaction in which hydroxymethyl group from 5,10-methylenetetrahydrofolate is transferred onto alpha-ketoisovalerate to form ketopantoate. This Bacillus cereus (strain B4264) protein is 3-methyl-2-oxobutanoate hydroxymethyltransferase.